Here is a 47-residue protein sequence, read N- to C-terminus: Potamin-1 (47 aa).

3 cysteine pairs are disulfide-bonded: Cys-3-Cys-40, Cys-6-Cys-24, and Cys-7-Cys-36.

In terms of biological role, inhibitor of serine proteases chymotrypsin, papain and trypsin. Has strong antifungal activity against C.albicans and R.solani. Has antibacterial activity against the Gram-positive bacterium C.michiganense, but lacks antibacterial activity against the Gram-positive bacterium S.aureus. Lacks hemolytic activity against human erythrocytes. The chain is Potamin-1 from Solanum tuberosum (Potato).